The following is a 204-amino-acid chain: Recombination protein RecR (204 aa).

A C4-type zinc finger spans residues 58–75 (CSICQNITDLGTDPCLLC). A Toprim domain is found at 83–181 (SVICVVESPT…NVTRIARGIP (99 aa)).

This sequence belongs to the RecR family.

May play a role in DNA repair. It seems to be involved in an RecBC-independent recombinational process of DNA repair. It may act with RecF and RecO. This Chlorobaculum parvum (strain DSM 263 / NCIMB 8327) (Chlorobium vibrioforme subsp. thiosulfatophilum) protein is Recombination protein RecR.